A 196-amino-acid polypeptide reads, in one-letter code: Probable malonic semialdehyde reductase RutE (196 aa).

Belongs to the nitroreductase family. HadB/RutE subfamily. Requires FMN as cofactor.

It catalyses the reaction 3-hydroxypropanoate + NADP(+) = 3-oxopropanoate + NADPH + H(+). Its function is as follows. May reduce toxic product malonic semialdehyde to 3-hydroxypropionic acid, which is excreted. This chain is Probable malonic semialdehyde reductase RutE, found in Escherichia coli O6:H1 (strain CFT073 / ATCC 700928 / UPEC).